Consider the following 473-residue polypeptide: 3-isopropylmalate dehydratase large subunit (473 aa).

3 residues coordinate [4Fe-4S] cluster: Cys353, Cys414, and Cys417.

It belongs to the aconitase/IPM isomerase family. LeuC type 1 subfamily. Heterodimer of LeuC and LeuD. The cofactor is [4Fe-4S] cluster.

The catalysed reaction is (2R,3S)-3-isopropylmalate = (2S)-2-isopropylmalate. It participates in amino-acid biosynthesis; L-leucine biosynthesis; L-leucine from 3-methyl-2-oxobutanoate: step 2/4. Functionally, catalyzes the isomerization between 2-isopropylmalate and 3-isopropylmalate, via the formation of 2-isopropylmaleate. This is 3-isopropylmalate dehydratase large subunit from Cellvibrio japonicus (strain Ueda107) (Pseudomonas fluorescens subsp. cellulosa).